The primary structure comprises 1287 residues: Vacuolating cytotoxin autotransporter (1287 aa).

The N-terminal stretch at 1–33 (MEIQQTHRKINRPLVSLALVGALVSITPQQSHA) is a signal peptide. The interval 326–381 (PPEGGYKDKPNNTPSQSGAKNDKQESSQNNSNTQVINPPNSTQKTEVQPTQVIDGP) is disordered. Positions 351 to 376 (SSQNNSNTQVINPPNSTQKTEVQPTQ) are enriched in polar residues. The Autotransporter domain maps to 1014 to 1287 (KYEKPTNVWA…ASNLGMRYSF (274 aa)).

The protein localises to the periplasm. The protein resides in the secreted. It is found in the cell surface. It localises to the cell outer membrane. Induces vacuolation of eukaryotic cells. Causes ulceration and gastric lesions. This is Vacuolating cytotoxin autotransporter (vacA) from Helicobacter pylori (Campylobacter pylori).